The primary structure comprises 345 residues: Membrane progestin receptor alpha (345 aa).

The Cytoplasmic portion of the chain corresponds to 1–74 (MAMAVAQKFN…FQRHNEAVNV (74 aa)). The chain crosses the membrane as a helical span at residues 75-95 (WTHLLAALALLLRLIGLAASV). Over 96-102 (DFREDPH) the chain is Extracellular. The helical transmembrane segment at 103-123 (ALPLFFIVLASFTYLSFSAVA) threads the bilayer. Over 124 to 136 (HLLQAKSEFWHYS) the chain is Cytoplasmic. The helical transmembrane segment at 137-157 (FFFLDYVGVAVYQFGSALAHF) threads the bilayer. Over 158–168 (YYAIEPSWHDK) the chain is Extracellular. Residues 169–189 (VQAIFLPTAAFLAWLSCAGSC) form a helical membrane-spanning segment. The Cytoplasmic portion of the chain corresponds to 190-243 (YNKYSQKPGLLGRIFQEAPSALAYVLDISPVLHRIIVSPLPAEEDPALLYHKCQ). The chain crosses the membrane as a helical span at residues 244–264 (VVFFLLAAAFFSTVMPESWFP). The Extracellular segment spans residues 265–268 (GSCH). Residues 269 to 289 (IFGQGHQVFHVFLVLCTLAQL) form a helical membrane-spanning segment. Residues 290–315 (EAVTLDYQARRGIYEPLHARWPHNFS) lie on the Cytoplasmic side of the membrane. Residues 316 to 336 (GLFLLTVASSSLTALLLSQLV) form a helical membrane-spanning segment. Topologically, residues 337–345 (RRKLHQKTK) are extracellular.

It belongs to the ADIPOR family. In terms of tissue distribution, detected in most adult tissues. Higher expression found in white fat and liver than brown fat and skeletal muscle.

The protein localises to the cell membrane. In terms of biological role, plasma membrane progesterone (P4) receptor coupled to G proteins. Seems to act through a G(i) mediated pathway. May be involved in oocyte maturation. Involved in neurosteroid inhibition of apoptosis. Also binds dehydroepiandrosterone (DHEA), pregnanolone, pregnenolone and allopregnanolone. This chain is Membrane progestin receptor alpha, found in Mus musculus (Mouse).